The chain runs to 250 residues: Probable transcriptional regulatory protein Mkms_2298 (250 aa).

The protein belongs to the TACO1 family.

It localises to the cytoplasm. The protein is Probable transcriptional regulatory protein Mkms_2298 of Mycobacterium sp. (strain KMS).